Consider the following 260-residue polypeptide: E3 ubiquitin-protein ligase SRFP1 (260 aa).

Residues 11 to 80 (FGRMGFGCKH…VAQVCYNCGV (70 aa)) form a CHY-type zinc finger. Positions 18, 20, 31, 32, 38, 41, 42, 50, 62, 65, 75, 78, 87, 90, 103, 104, 107, 110, 120, 121, 124, 127, 136, and 138 each coordinate Zn(2+). A CTCHY-type zinc finger spans residues 82–146 (MGEYFCSACK…CCIENSMKNN (65 aa)). The RING-type; atypical zinc finger occupies 147–190 (CPICYEYLFDSLRETSVLRCGHTMHLQCFHEMLKHDKFSCPICS).

Expressed in roots, leaves, nodes and panicles.

Its subcellular location is the nucleus. The protein localises to the cytoplasm. The catalysed reaction is S-ubiquitinyl-[E2 ubiquitin-conjugating enzyme]-L-cysteine + [acceptor protein]-L-lysine = [E2 ubiquitin-conjugating enzyme]-L-cysteine + N(6)-ubiquitinyl-[acceptor protein]-L-lysine.. Its pathway is protein modification; protein ubiquitination. Its function is as follows. Possesses E3 ubiquitin-protein ligase activity in vitro. Possesses transactivation activity in yeast cells. May modulate abiotic stress responses by negatively regulating antioxidant enzymes-mediated reactive oxygen species (ROS) removal. The polypeptide is E3 ubiquitin-protein ligase SRFP1 (Oryza sativa subsp. japonica (Rice)).